The primary structure comprises 66 residues: DNA-directed RNA polymerase subunit Rpo10 (66 aa).

Positions 7, 10, 44, and 45 each coordinate Zn(2+).

This sequence belongs to the archaeal Rpo10/eukaryotic RPB10 RNA polymerase subunit family. As to quaternary structure, part of the RNA polymerase complex. Zn(2+) serves as cofactor.

The protein resides in the cytoplasm. The catalysed reaction is RNA(n) + a ribonucleoside 5'-triphosphate = RNA(n+1) + diphosphate. Its function is as follows. DNA-dependent RNA polymerase (RNAP) catalyzes the transcription of DNA into RNA using the four ribonucleoside triphosphates as substrates. This chain is DNA-directed RNA polymerase subunit Rpo10, found in Sulfurisphaera tokodaii (strain DSM 16993 / JCM 10545 / NBRC 100140 / 7) (Sulfolobus tokodaii).